A 619-amino-acid chain; its full sequence is MVKESIIALAEHAASRASRVIPPVKLAYKNMLKDPSSKYKPFNAPKLSNRKWPDNRITRAPRWLSTDLRDGNQSLPDPMSVEQKKEYFHKLVNIGFKEIEVSFPSASQTDFDFTRYAVENAPDDVSIQCLVQSREHLIKRTVEALTGAKKATIHTYLATSDMFREIVFNMSREEAISKAVEATKLVRKLTKDDPSQQATRWSYEFSPECFSDTPGEFAVEICEAVKKAWEPTEENPIIFNLPATVEVASPNVYADQIEYFATHITEREKVCISTHCHNDRGCGVAATELGMLAGADRVEGCLFGNGERTGNVDLVTVAMNMYTQGVSPNLDFSDLTSVLDVVERCNKIPVSQRAPYGGDLVVCAFSGSHQDAIKKGFNLQNKKRAQGETQWRIPYLPLDPKDIGRDYEAVIRVNSQSGKGGAAWVILRSLGLDLPRNMQIEFSSAVQDHADSLGRELKSDEISKLFKEAYNYNDEQYQAISLVNYNVEKFGTERRVFTGQVKVGDQIVDIEGTGNGPISSLVDALSNLLNVRFAVANYTEHSLGSGSSTQAASYIHLSYRRNADNEKAYKWGVGVSEDVGDSSVRAIFATINNIIHSGDVSIPSLAEVEGKNAAASGSA.

A Pyruvate carboxyltransferase domain is found at 61-336 (PRWLSTDLRD…SPNLDFSDLT (276 aa)). A divalent metal cation contacts are provided by Asp70, His275, His277, and Asn311.

Belongs to the alpha-IPM synthase/homocitrate synthase family. LeuA type 2 subfamily. Homodimer. Requires a divalent metal cation as cofactor.

Its subcellular location is the cytoplasm. The protein resides in the mitochondrion. The catalysed reaction is 3-methyl-2-oxobutanoate + acetyl-CoA + H2O = (2S)-2-isopropylmalate + CoA + H(+). The protein operates within amino-acid biosynthesis; L-leucine biosynthesis; L-leucine from 3-methyl-2-oxobutanoate: step 1/4. In terms of biological role, catalyzes the condensation of the acetyl group of acetyl-CoA with 3-methyl-2-oxobutanoate (2-oxoisovalerate) to form 3-carboxy-3-hydroxy-4-methylpentanoate (2-isopropylmalate). The chain is 2-isopropylmalate synthase (LEU4) from Saccharomyces cerevisiae (strain ATCC 204508 / S288c) (Baker's yeast).